A 289-amino-acid polypeptide reads, in one-letter code: MSTFKLLKTLTSRRQVLKTGLAALTLSGMSHAVAKEETLKTSNGHSKPKTKKTGSKRLVMLDPGHGGIDTGAIGRNGSQEKHVVLAIAKNVRAILRNHGIDARLTRTGDTFIPLYDRVEIAHKHGADLFMSIHADGFTNPKAAGASVFALSNRGASSAMAKYLSERENRADEVAGKKATDRDHLLQQVLFDLVQTDTIKNSLTLGSHILKKIKPIHKLHSRTTEQAAFVVLKSPSIPSVLVETSFITNPEEERLLGTTAFRQKIATAIANGIISYFHWFDNQKAHTKKR.

A signal peptide (tat-type signal) is located at residues 1–34 (MSTFKLLKTLTSRRQVLKTGLAALTLSGMSHAVA). The segment at 36–61 (EETLKTSNGHSKPKTKKTGSKRLVML) is disordered. Positions 46-55 (SKPKTKKTGS) are enriched in basic residues. The MurNAc-LAA domain occupies 59-273 (VMLDPGHGGI…IATAIANGII (215 aa)).

Belongs to the N-acetylmuramoyl-L-alanine amidase 3 family. Predicted to be exported by the Tat system. The position of the signal peptide cleavage has not been experimentally proven.

Its subcellular location is the periplasm. The catalysed reaction is Hydrolyzes the link between N-acetylmuramoyl residues and L-amino acid residues in certain cell-wall glycopeptides.. In terms of biological role, cell-wall hydrolase involved in septum cleavage during cell division. In Salmonella typhimurium (strain LT2 / SGSC1412 / ATCC 700720), this protein is N-acetylmuramoyl-L-alanine amidase AmiA (amiA).